The sequence spans 931 residues: MTSQLITRLLPINSTTSPSIYETIRQYDDDSGHSDTEERAAMAVDEENLDGAYQDYELEGALAQASDTQSTHSSFQSPAAGDSHLPRHPKWTQESVNEAEHDDEVPASLLVEGDGEEDPLPPPPRPPSNRNRILDDAPAAEFCSPRLRGQWEAAEEHQTPHLAPQPSPPLNLHSNRRAGLAFANPKEKAMWRWANVENLDNFLKDVYIYFIGNGIWCIVLSRMLNILTLAFVVGFTTFLTNCVDYRKVPHSKTLNQIIVPKCTNKMSASSTFFLWLFTVFWFGKVFQYIIDFRRLRHMHDFYLYLLDVPDSDIQTISWQEVVGRLMALRDANPATAGTVSTKHRKYIGSQSKQRMDAHDIANRLMRKENYLIALFNKEILDLTLPIPFLRNRQLFSRTLEWNLNLCILDYVFNEQGQLRPLFLKATHRRALSEGLRRRFIFAGVMNIFIAPFIVAYFLMHYFFRYFNEYQKNPSKIGSRQYTPLAEWKFREFNELWHLFERRIHMSYESANMYINQFPKDKTVQLSRFVAFIAGALLSVLALASVIDPELFLGFEITHDRTVLFYIGLFGTVYAVARGVVPDDAQVFDPEHALLDVTAYTHYKPAHWQGKLHSDDVRKEFATLYQLKVVIFLEEILSMIFTPFVLWFSLPKCSDRLIDFFREFTVHVDGLGYVCSFAVFDFKKGTNLMPPEPQHHRPRGLKHGLHDLRGDYFSAKDGKMLASYYGFLDHYAPPARPSGPHASQRQNYPQQPVPGPTHRAQPGANHLHSSRIDRWDNGQHSTMRQSALRTSRFGAITGVGGHASPMASMLLDPHHQPSMSGFRSKAHPTAASRYRPSRQAHPMADTIQDVDEDQLPGINIQPSNVTTTSSGGPATDDSQIEESWRINLAEDANSGEDDEAEDVEKVAGGGGVLGLIHQFQKVTNEGRGAVGM.

Over 1 to 214 (MTSQLITRLL…DVYIYFIGNG (214 aa)) the chain is Cytoplasmic. The segment at 62–133 (LAQASDTQST…PRPPSNRNRI (72 aa)) is disordered. Residues 65-77 (ASDTQSTHSSFQS) show a composition bias toward polar residues. Residues 215 to 235 (IWCIVLSRMLNILTLAFVVGF) traverse the membrane as a helical segment. At 236 to 271 (TTFLTNCVDYRKVPHSKTLNQIIVPKCTNKMSASST) the chain is on the lumenal side. The chain crosses the membrane as a helical span at residues 272–292 (FFLWLFTVFWFGKVFQYIIDF). Residues 293 to 438 (RRLRHMHDFY…RALSEGLRRR (146 aa)) lie on the Cytoplasmic side of the membrane. The stretch at 439–459 (FIFAGVMNIFIAPFIVAYFLM) is an intramembrane region. Residues 460–527 (HYFFRYFNEY…PKDKTVQLSR (68 aa)) lie on the Cytoplasmic side of the membrane. Residues 528–548 (FVAFIAGALLSVLALASVIDP) form a helical membrane-spanning segment. Over 549 to 560 (ELFLGFEITHDR) the chain is Lumenal. The helical transmembrane segment at 561–581 (TVLFYIGLFGTVYAVARGVVP) threads the bilayer. At 582 to 627 (DDAQVFDPEHALLDVTAYTHYKPAHWQGKLHSDDVRKEFATLYQLK) the chain is on the cytoplasmic side. Residues 628–648 (VVIFLEEILSMIFTPFVLWFS) lie within the membrane without spanning it. The Cytoplasmic portion of the chain corresponds to 649 to 931 (LPKCSDRLID…TNEGRGAVGM (283 aa)). Disordered stretches follow at residues 734–780 (ARPS…GQHS), 816–840 (PSMSGFRSKAHPTAASRYRPSRQAH), and 854–879 (LPGINIQPSNVTTTSSGGPATDDSQI). The span at 740–749 (HASQRQNYPQ) shows a compositional bias: polar residues. Over residues 859–871 (IQPSNVTTTSSGG) the composition is skewed to polar residues.

This sequence belongs to the ATG9 family. Homotrimer; forms a homotrimer with a central pore that forms a path between the two membrane leaflets. In terms of processing, phosphorylated by ATG1. ATG1 phosphorylation is required for preautophagosome elongation.

It localises to the preautophagosomal structure membrane. Its subcellular location is the cytoplasmic vesicle membrane. The protein resides in the golgi apparatus membrane. The protein localises to the endoplasmic reticulum membrane. It carries out the reaction a 1,2-diacyl-sn-glycero-3-phosphocholine(in) = a 1,2-diacyl-sn-glycero-3-phosphocholine(out). It catalyses the reaction a 1,2-diacyl-sn-glycero-3-phospho-L-serine(in) = a 1,2-diacyl-sn-glycero-3-phospho-L-serine(out). The catalysed reaction is a 1,2-diacyl-sn-glycero-3-phosphoethanolamine(in) = a 1,2-diacyl-sn-glycero-3-phosphoethanolamine(out). The enzyme catalyses a 1,2-diacyl-sn-glycero-3-phospho-(1D-myo-inositol-3-phosphate)(in) = a 1,2-diacyl-sn-glycero-3-phospho-(1D-myo-inositol-3-phosphate)(out). Its function is as follows. Phospholipid scramblase involved in autophagy and cytoplasm to vacuole transport (Cvt) vesicle formation. Cycles between the preautophagosomal structure/phagophore assembly site (PAS) and the cytoplasmic vesicle pool and supplies membrane for the growing autophagosome. Lipid scramblase activity plays a key role in preautophagosomal structure/phagophore assembly by distributing the phospholipids that arrive through ATG2 from the cytoplasmic to the luminal leaflet of the bilayer, thereby driving autophagosomal membrane expansion. Required for mitophagy. Also involved in endoplasmic reticulum-specific autophagic process and is essential for the survival of cells subjected to severe ER stress. Different machineries are required for anterograde trafficking to the PAS during either the Cvt pathway or bulk autophagy and for retrograde trafficking. This is Autophagy-related protein 9 (ATG9) from Coccidioides immitis (strain RS) (Valley fever fungus).